We begin with the raw amino-acid sequence, 270 residues long: uncharacterized protein (270 aa).

30–55 is a binding site for NADP(+); it reads ATGSLGRVAARALADAGARLTLAGGN. Position 157 (S157) interacts with substrate. Y171 functions as the Proton acceptor in the catalytic mechanism.

The protein belongs to the short-chain dehydrogenases/reductases (SDR) family.

This is an uncharacterized protein from Mycobacterium tuberculosis (strain CDC 1551 / Oshkosh).